A 328-amino-acid polypeptide reads, in one-letter code: Tetraacyldisaccharide 4'-kinase (328 aa).

55 to 62 (TAGGNGKT) contacts ATP.

This sequence belongs to the LpxK family.

The enzyme catalyses a lipid A disaccharide + ATP = a lipid IVA + ADP + H(+). It participates in glycolipid biosynthesis; lipid IV(A) biosynthesis; lipid IV(A) from (3R)-3-hydroxytetradecanoyl-[acyl-carrier-protein] and UDP-N-acetyl-alpha-D-glucosamine: step 6/6. Functionally, transfers the gamma-phosphate of ATP to the 4'-position of a tetraacyldisaccharide 1-phosphate intermediate (termed DS-1-P) to form tetraacyldisaccharide 1,4'-bis-phosphate (lipid IVA). This Escherichia coli O6:K15:H31 (strain 536 / UPEC) protein is Tetraacyldisaccharide 4'-kinase.